Reading from the N-terminus, the 210-residue chain is Probable septum site-determining protein MinC (210 aa).

Belongs to the MinC family. As to quaternary structure, interacts with MinD and FtsZ.

Its function is as follows. Cell division inhibitor that blocks the formation of polar Z ring septums. Rapidly oscillates between the poles of the cell to destabilize FtsZ filaments that have formed before they mature into polar Z rings. Prevents FtsZ polymerization. The chain is Probable septum site-determining protein MinC from Thermotoga petrophila (strain ATCC BAA-488 / DSM 13995 / JCM 10881 / RKU-1).